The chain runs to 503 residues: Cytochrome P450 71B6 (503 aa).

A helical transmembrane segment spans residues 10–30 (TELLPWLLLLLIPPLLIFFLL). Cys446 is a binding site for heme.

It belongs to the cytochrome P450 family. The cofactor is heme.

The protein resides in the membrane. The sequence is that of Cytochrome P450 71B6 (CYP71B6) from Arabidopsis thaliana (Mouse-ear cress).